Consider the following 371-residue polypeptide: Protein NDRG2 (371 aa).

The disordered stretch occupies residues 1–22 (MAELQEVQITEEKPLLPGQTPE). Ala-2 bears the N-acetylalanine mark. The residue at position 20 (Thr-20) is a Phosphothreonine. Ser-326 and Ser-328 each carry phosphoserine. At Thr-330 the chain carries Phosphothreonine; by SGK1. Phosphoserine; by PKC/PRKCQ or SGK1 is present on Ser-332. The residue at position 334 (Thr-334) is a Phosphothreonine. The segment at 334–371 (TSAASIDGSRSRSRTLSQSSESGTLPSGPPGHTMEVSC) is disordered. 3 positions are modified to phosphoserine: Ser-335, Ser-338, and Ser-344. Position 348 is a phosphothreonine; by PKB/AKT1 or SGK1 (Thr-348). 4 positions are modified to phosphoserine: Ser-350, Ser-352, Ser-353, and Ser-355. Residue Thr-357 is modified to Phosphothreonine. Ser-370 is subject to Phosphoserine.

The protein belongs to the NDRG family. As to quaternary structure, interacts with CTNNB1. Expressed at highest levels in brain, heart and liver, and at lower levels in kidney, colon, skeletal muscle, adrenal gland, ovary and uterus (at protein level).

The protein localises to the cytoplasm. Its subcellular location is the perinuclear region. The protein resides in the cell projection. It localises to the growth cone. Functionally, contributes to the regulation of the Wnt signaling pathway. Down-regulates CTNNB1-mediated transcriptional activation of target genes, such as CCND1, and may thereby act as tumor suppressor. May be involved in dendritic cell and neuron differentiation. The protein is Protein NDRG2 (Ndrg2) of Mus musculus (Mouse).